Reading from the N-terminus, the 115-residue chain is UPF0738 protein SSP1780 (115 aa).

This sequence belongs to the UPF0738 family.

This Staphylococcus saprophyticus subsp. saprophyticus (strain ATCC 15305 / DSM 20229 / NCIMB 8711 / NCTC 7292 / S-41) protein is UPF0738 protein SSP1780.